A 416-amino-acid chain; its full sequence is Histidine--tRNA ligase (416 aa).

The protein belongs to the class-II aminoacyl-tRNA synthetase family. Homodimer.

The protein localises to the cytoplasm. The catalysed reaction is tRNA(His) + L-histidine + ATP = L-histidyl-tRNA(His) + AMP + diphosphate + H(+). The chain is Histidine--tRNA ligase from Dictyoglomus thermophilum (strain ATCC 35947 / DSM 3960 / H-6-12).